A 408-amino-acid polypeptide reads, in one-letter code: Pleckstrin homology domain-containing family O member 1 (408 aa).

The disordered stretch occupies residues Met1–Pro21. In terms of domain architecture, PH spans Ala20–Thr131. The interval Arg132–Glu192 is interaction with capping proteins (CPs). An interaction with ATM, CKIP, IFP35 and NMI region spans residues Asn135–Ile307. A disordered region spans residues Leu217–Glu264. A Phosphoserine modification is found at Ser226. Residues Ile229–Ser240 show a composition bias toward polar residues. Phosphoserine is present on residues Ser270 and Ser341. The interval Ile307 to Met408 is negative regulator of AP-1 activity. Disordered stretches follow at residues Val325–Glu348 and Thr389–Met408. Residues Thr389–Ser401 show a composition bias toward polar residues.

As to quaternary structure, heterodimer or homodimer. Interacts with CK2 and actin capping subunits (capping protein CP-alpha and CP-beta). CKIP1 and CK2 together inhibit the activity of actin capping protein at the barbed ends of actin filaments. Interacts with ATM, IFP35, JUN, JUND, NMI and PI3K. Interacts with AKT1, AKT2 and AKT3 (each isozyme of PKB), PtdIns(3,5)P2, PtdIns(4,5)P2 and PtdIns(3,4,5)P2. Post-translationally, C-terminal fragments could be released during apoptosis via caspase-3-dependent cleavage.

The protein localises to the cell membrane. The protein resides in the nucleus. It is found in the cytoplasm. Plays a role in the regulation of the actin cytoskeleton through its interactions with actin capping protein (CP). May function to target CK2 to the plasma membrane thereby serving as an adapter to facilitate the phosphorylation of CP by protein kinase 2 (CK2). Appears to target ATM to the plasma membrane. Appears to also inhibit tumor cell growth by inhibiting AKT-mediated cell-survival. Also implicated in PI3K-regulated muscle differentiation, the regulation of AP-1 activity (plasma membrane bound AP-1 regulator that translocates to the nucleus) and the promotion of apoptosis induced by tumor necrosis factor TNF. When bound to PKB, it inhibits it probably by decreasing PKB level of phosphorylation. The protein is Pleckstrin homology domain-containing family O member 1 (Plekho1) of Mus musculus (Mouse).